The chain runs to 396 residues: MGERKGVNKYYPPDFNPEKHGSLNRYHNSHPLRERARKLSQGILIIRFEMPYNIWCDGCKNHIGMGVRYNAEKKKVGNYYTTPIYRFRMKCHLCVNYIEMQTDPANCDYVIVSGAQRKEERWDMADNEQVLTTEHEKKQKLETDAMFRLEHGEADRSTLKKALPTLSHIQEAQSAWKDDFALNSMLRRRFREKKKAIQEEEERDQALQAKASLTIPLVPETEDDRKLAALLKFHTLDSYEDKQKLKRTEIISRSWFPSAPGSASSSKVSGVLKKLAQSRRTALATSPITVGDLGIVRRRSRDVPESPQHAADTPKSGEPRVPEEAAQDRPMSPGDCPPETTETPKCSSPRGQEGSRQDKPLSPAGSSQEAADTPDTRHPCSLGSSLVADYSDSESE.

Residues methionine 1–tyrosine 26 are disordered. Serine 40 is modified (phosphoserine). A coiled-coil region spans residues leucine 182 to threonine 214. The disordered stretch occupies residues isoleucine 295–glutamate 396. The residue at position 306 (serine 306) is a Phosphoserine. Residues lysine 315–glutamine 327 show a composition bias toward basic and acidic residues. Polar residues predominate over residues threonine 340–arginine 350. Serine 362 is subject to Phosphoserine.

This sequence belongs to the CWC16 family.

The protein localises to the nucleus. May be involved in mRNA splicing. This chain is Probable splicing factor YJU2B, found in Homo sapiens (Human).